We begin with the raw amino-acid sequence, 316 residues long: Deoxyribonuclease-1-like 1 (316 aa).

Positions M1–T28 are cleaved as a signal peptide. Catalysis depends on residues E107 and H158. C197 and C234 are oxidised to a cystine. Residue N271 is glycosylated (N-linked (GlcNAc...) asparagine).

It belongs to the DNase I family.

The protein localises to the endoplasmic reticulum. This Bos taurus (Bovine) protein is Deoxyribonuclease-1-like 1 (DNASE1L1).